Here is a 258-residue protein sequence, read N- to C-terminus: Deoxyribose-phosphate aldolase (258 aa).

The Proton donor/acceptor role is filled by Asp-102. Lys-165 serves as the catalytic Schiff-base intermediate with acetaldehyde. The active-site Proton donor/acceptor is Lys-199.

It belongs to the DeoC/FbaB aldolase family. DeoC type 2 subfamily.

It localises to the cytoplasm. It carries out the reaction 2-deoxy-D-ribose 5-phosphate = D-glyceraldehyde 3-phosphate + acetaldehyde. The protein operates within carbohydrate degradation; 2-deoxy-D-ribose 1-phosphate degradation; D-glyceraldehyde 3-phosphate and acetaldehyde from 2-deoxy-alpha-D-ribose 1-phosphate: step 2/2. Its function is as follows. Catalyzes a reversible aldol reaction between acetaldehyde and D-glyceraldehyde 3-phosphate to generate 2-deoxy-D-ribose 5-phosphate. In Vibrio vulnificus (strain CMCP6), this protein is Deoxyribose-phosphate aldolase.